Consider the following 563-residue polypeptide: Inclusion body clearance protein IML2 (563 aa).

Belongs to the IML2 family. As to quaternary structure, interacts with lipid droplet proteins.

The protein resides in the cytoplasm. Its subcellular location is the nucleus. Inclusion body (IB) resident protein that interacts strongly with lipid droplet (LD) proteins. Involved in LD-mediated IB clearing after protein folding stress, probably by enabling access to the IBs of an LD-stored soluble sterol derivative that acts as a chaperone in inclusion clearing. In Schizosaccharomyces pombe (strain 972 / ATCC 24843) (Fission yeast), this protein is Inclusion body clearance protein IML2.